A 148-amino-acid chain; its full sequence is Small ribosomal subunit protein eS19 (148 aa).

The protein belongs to the eukaryotic ribosomal protein eS19 family.

The polypeptide is Small ribosomal subunit protein eS19 (rps19) (Dictyostelium discoideum (Social amoeba)).